The chain runs to 391 residues: Phosphopentomutase (391 aa).

D14 serves as a coordination point for Mn(2+). The tract at residues 61 to 88 (IQGVPPDPAPTAFHGRMAERSEGKDTTT) is disordered. The segment covering 76–87 (RMAERSEGKDTT) has biased composition (basic and acidic residues). 5 residues coordinate Mn(2+): D286, H291, D327, H328, and H339.

This sequence belongs to the phosphopentomutase family. Mn(2+) serves as cofactor.

The protein resides in the cytoplasm. It catalyses the reaction 2-deoxy-alpha-D-ribose 1-phosphate = 2-deoxy-D-ribose 5-phosphate. It carries out the reaction alpha-D-ribose 1-phosphate = D-ribose 5-phosphate. The protein operates within carbohydrate degradation; 2-deoxy-D-ribose 1-phosphate degradation; D-glyceraldehyde 3-phosphate and acetaldehyde from 2-deoxy-alpha-D-ribose 1-phosphate: step 1/2. Functionally, isomerase that catalyzes the conversion of deoxy-ribose 1-phosphate (dRib-1-P) and ribose 1-phosphate (Rib-1-P) to deoxy-ribose 5-phosphate (dRib-5-P) and ribose 5-phosphate (Rib-5-P), respectively. In Anaeromyxobacter dehalogenans (strain 2CP-C), this protein is Phosphopentomutase.